The chain runs to 264 residues: Glutamate racemase (264 aa).

Residues 9 to 10 (DS) and 41 to 42 (YG) each bind substrate. C72 functions as the Proton donor/acceptor in the catalytic mechanism. 73 to 74 (NT) contacts substrate. Catalysis depends on C183, which acts as the Proton donor/acceptor. Residue 184–185 (TH) participates in substrate binding.

This sequence belongs to the aspartate/glutamate racemases family.

The catalysed reaction is L-glutamate = D-glutamate. The protein operates within cell wall biogenesis; peptidoglycan biosynthesis. Its function is as follows. Provides the (R)-glutamate required for cell wall biosynthesis. In Geobacillus sp. (strain WCH70), this protein is Glutamate racemase.